A 257-amino-acid polypeptide reads, in one-letter code: uncharacterized protein (257 aa).

The first 22 residues, 1 to 22 (MIHSRKLRLWLYLVLLAVFIGA), serve as a signal peptide directing secretion. Cysteine 23 carries the N-palmitoyl cysteine lipid modification. Cysteine 23 is lipidated: S-diacylglycerol cysteine.

It belongs to the staphylococcal tandem lipoprotein family.

The protein resides in the cell membrane. This is an uncharacterized protein from Staphylococcus aureus (strain Mu50 / ATCC 700699).